We begin with the raw amino-acid sequence, 701 residues long: Glycine--tRNA ligase beta subunit (701 aa).

This sequence belongs to the class-II aminoacyl-tRNA synthetase family. Tetramer of two alpha and two beta subunits.

The protein localises to the cytoplasm. The catalysed reaction is tRNA(Gly) + glycine + ATP = glycyl-tRNA(Gly) + AMP + diphosphate. The sequence is that of Glycine--tRNA ligase beta subunit from Nitratidesulfovibrio vulgaris (strain DSM 19637 / Miyazaki F) (Desulfovibrio vulgaris).